The following is a 329-amino-acid chain: Sex comb on midleg-like protein 1 (329 aa).

Phosphoserine occurs at positions 138 and 238. The segment at 138–157 is disordered; the sequence is SPTLPVSRRENNSPSNLPRP. In terms of domain architecture, SAM spans 258–325; the sequence is WSVEAVVLFL…YYIDRLKQGK (68 aa).

It belongs to the SCM family. In terms of tissue distribution, ubiquitous. Expressed in fetal and adult tissues.

It localises to the nucleus. Functionally, putative Polycomb group (PcG) protein. PcG proteins act by forming multiprotein complexes, which are required to maintain the transcriptionally repressive state of homeotic genes throughout development. May be involved in spermatogenesis during sexual maturation. The chain is Sex comb on midleg-like protein 1 (SCML1) from Homo sapiens (Human).